A 207-amino-acid chain; its full sequence is Large ribosomal subunit protein uL4 (207 aa).

The segment at 62 to 85 (KKPFKQKGTGQARQGCRRAPQYPG) is disordered.

It belongs to the universal ribosomal protein uL4 family. In terms of assembly, part of the 50S ribosomal subunit.

Its function is as follows. One of the primary rRNA binding proteins, this protein initially binds near the 5'-end of the 23S rRNA. It is important during the early stages of 50S assembly. It makes multiple contacts with different domains of the 23S rRNA in the assembled 50S subunit and ribosome. In terms of biological role, forms part of the polypeptide exit tunnel. This is Large ribosomal subunit protein uL4 from Geobacter sp. (strain M21).